Here is a 291-residue protein sequence, read N- to C-terminus: Ribosome maturation factor RimP (291 aa).

The interval 188 to 291 (ERGLGEDEEF…GGKPKAKETH (104 aa)) is disordered. Positions 193–211 (EDEEFEDDADEVFEGDEAD) are enriched in acidic residues. Composition is skewed to basic and acidic residues over residues 212-237 (EKAA…EKRA) and 245-254 (AKSEKAEKSQ).

The protein belongs to the RimP family.

The protein resides in the cytoplasm. In terms of biological role, required for maturation of 30S ribosomal subunits. The protein is Ribosome maturation factor RimP of Azorhizobium caulinodans (strain ATCC 43989 / DSM 5975 / JCM 20966 / LMG 6465 / NBRC 14845 / NCIMB 13405 / ORS 571).